Reading from the N-terminus, the 631-residue chain is Mitochondrial Rho GTPase (631 aa).

The Cytoplasmic segment spans residues 1 to 605; the sequence is MRAGRVRPLR…TQADLKSSTF (605 aa). The 167-residue stretch at 15–181 folds into the Miro 1 domain; the sequence is KKDVRILLVG…FYYAQKAVLH (167 aa). Residues Arg-27, Gly-29, Lys-30, Thr-31, and Ser-32 each contribute to the GTP site. Thr-31 contacts Mg(2+). Mg(2+) is bound at residue Asp-70. Ser-72 contacts GTP. Position 105 is an N6-acetyllysine (Lys-105). The GTP site is built by Asn-131, Lys-132, Asp-134, Ala-162, and Lys-163. Lys-166 is covalently cross-linked (Glycyl lysine isopeptide (Lys-Gly) (interchain with G-Cter in ubiquitin)). The EF-hand 1 domain maps to 197-232; the sequence is ACIKALTRIFKISDQDNDGTLNDAELNFFQRICFNT. Residues Asp-210, Asp-212, Asp-214, Thr-216, and Glu-221 each contribute to the Ca(2+) site. A Glycyl lysine isopeptide (Lys-Gly) (interchain with G-Cter in ubiquitin) cross-link involves residue Lys-248. The EF-hand 2 domain maps to 317 to 352; that stretch reads HAYLFLQSTFDKHDLDRDCALSPDELKDLFQVFPYI. Asp-330, Asp-332, Asp-334, Ala-336, and Glu-341 together coordinate Ca(2+). The region spanning 429–592 is the Miro 2 domain; sequence RNVFRCNVIG…FVKLTTMAMY (164 aa). Gly-441, Cys-442, Gly-443, Lys-444, Thr-445, Gly-446, Lys-460, Lys-541, Asp-543, Thr-571, and Cys-572 together coordinate GTP. Gly-441 contacts Mg(2+). Lys-585 participates in a covalent cross-link: Glycyl lysine isopeptide (Lys-Gly) (interchain with G-Cter in ubiquitin). Residues 606-628 traverse the membrane as a helical; Anchor for type IV membrane protein segment; it reads WLRASFGATVFAVVGFAMYRALL. Residues 629-631 are Mitochondrial intermembrane-facing; the sequence is KQR.

It belongs to the mitochondrial Rho GTPase family. As to quaternary structure, homodimer. Interacts with the kinesin-binding proteins TRAK1/OIP106 and TRAK2/GRIF1, forming a link between mitochondria and the trafficking apparatus of the microtubules. Interacts with RAP1GDS1. Interacts with ARMCX1. Found in a complex with KIF5B, OGT, RHOT2 and TRAK1. In terms of processing, ubiquitinated by PRKN during mitophagy, leading to its degradation and enhancement of mitophagy. Deubiquitinated by USP30. Acetylation on Lys-105 decreases sensitivity of mitochondrial transport to elevated Ca(2+) levels, increases mitochondrial transport and promotes axon growth. Deacetylated by HDAC6 which blocks mitochondrial transport and mediates axon growth inhibition.

The protein localises to the mitochondrion outer membrane. The catalysed reaction is GTP + H2O = GDP + phosphate + H(+). The enzyme catalyses ATP + H2O = ADP + phosphate + H(+). It catalyses the reaction UTP + H2O = UDP + phosphate + H(+). In terms of biological role, atypical mitochondrial nucleoside-triphosphatase (NTPase) involved in mitochondrial trafficking. Probably involved in control of anterograde transport of mitochondria and their subcellular distribution. Promotes mitochondrial fission during high calcium conditions. Can hydrolyze GTP, ATP and UTP. The chain is Mitochondrial Rho GTPase from Rattus norvegicus (Rat).